Here is a 466-residue protein sequence, read N- to C-terminus: Argininosuccinate lyase (466 aa).

The protein belongs to the lyase 1 family. Argininosuccinate lyase subfamily.

Its subcellular location is the cytoplasm. It catalyses the reaction 2-(N(omega)-L-arginino)succinate = fumarate + L-arginine. The protein operates within amino-acid biosynthesis; L-arginine biosynthesis; L-arginine from L-ornithine and carbamoyl phosphate: step 3/3. The sequence is that of Argininosuccinate lyase from Brucella canis (strain ATCC 23365 / NCTC 10854 / RM-666).